The sequence spans 152 residues: MVKAVTVLNSSEGVTGTVYFTQEGDGPTTVTGNLSGLKPGLHGFHVHALGDTTNGCMSTGPHFNPVGKEHGAPGDENRHAGDLGNITVGEDGTAAINIVDKQIPLTGPHSIIGRAVVVHSDPDDLGRGGHELSKSTGNAGGRVACGIIGLQG.

N-linked (GlcNAc...) asparagine glycans are attached at residues Asn9 and Asn33. Cu cation contacts are provided by His45, His47, and His62. The cysteines at positions 56 and 145 are disulfide-linked. Residues His62, His70, His79, and Asp82 each coordinate Zn(2+). N-linked (GlcNAc...) asparagine glycosylation is present at Asn85. Position 119 (His119) interacts with Cu cation.

Belongs to the Cu-Zn superoxide dismutase family. Cu cation serves as cofactor. Requires Zn(2+) as cofactor. Expressed in fruits, leaves and pollen grains.

It localises to the cytoplasm. The protein resides in the endoplasmic reticulum. The catalysed reaction is 2 superoxide + 2 H(+) = H2O2 + O2. With respect to regulation, inhibited by KCN and H(2)O(2). Functionally, destroys radicals which are normally produced within the cells and which are toxic to biological systems. Probably involved in the protection against oxidative stress during pollen development. The sequence is that of Superoxide dismutase [Cu-Zn] 2 (OLE5) from Olea europaea (Common olive).